Reading from the N-terminus, the 251-residue chain is Pyridoxine 5'-phosphate synthase (251 aa).

Asparagine 7 lines the 3-amino-2-oxopropyl phosphate pocket. Residue 9 to 10 (DH) participates in 1-deoxy-D-xylulose 5-phosphate binding. Residue arginine 18 coordinates 3-amino-2-oxopropyl phosphate. Catalysis depends on histidine 43, which acts as the Proton acceptor. 2 residues coordinate 1-deoxy-D-xylulose 5-phosphate: arginine 45 and histidine 50. The Proton acceptor role is filled by glutamate 73. A 1-deoxy-D-xylulose 5-phosphate-binding site is contributed by threonine 103. The active-site Proton donor is histidine 197. Residues glycine 198 and 219–220 (GH) contribute to the 3-amino-2-oxopropyl phosphate site.

The protein belongs to the PNP synthase family. As to quaternary structure, homooctamer; tetramer of dimers.

Its subcellular location is the cytoplasm. It carries out the reaction 3-amino-2-oxopropyl phosphate + 1-deoxy-D-xylulose 5-phosphate = pyridoxine 5'-phosphate + phosphate + 2 H2O + H(+). It participates in cofactor biosynthesis; pyridoxine 5'-phosphate biosynthesis; pyridoxine 5'-phosphate from D-erythrose 4-phosphate: step 5/5. Its function is as follows. Catalyzes the complicated ring closure reaction between the two acyclic compounds 1-deoxy-D-xylulose-5-phosphate (DXP) and 3-amino-2-oxopropyl phosphate (1-amino-acetone-3-phosphate or AAP) to form pyridoxine 5'-phosphate (PNP) and inorganic phosphate. The chain is Pyridoxine 5'-phosphate synthase from Caulobacter sp. (strain K31).